The primary structure comprises 200 residues: Small ribosomal subunit protein uS4 (200 aa).

The tract at residues 20-41 is disordered; the sequence is TGTGKELDKRPYAPGQHGPNQR. The 61-residue stretch at 92–152 folds into the S4 RNA-binding domain; sequence SRLDNLVYRL…EKSKNLDVVK (61 aa).

Belongs to the universal ribosomal protein uS4 family. In terms of assembly, part of the 30S ribosomal subunit. Contacts protein S5. The interaction surface between S4 and S5 is involved in control of translational fidelity.

Functionally, one of the primary rRNA binding proteins, it binds directly to 16S rRNA where it nucleates assembly of the body of the 30S subunit. In terms of biological role, with S5 and S12 plays an important role in translational accuracy. The sequence is that of Small ribosomal subunit protein uS4 from Oceanobacillus iheyensis (strain DSM 14371 / CIP 107618 / JCM 11309 / KCTC 3954 / HTE831).